The following is a 388-amino-acid chain: Regulator of G-protein signaling 20 (388 aa).

Residues 138–199 form a disordered region; sequence PGRPSGGRPL…TPGAAPGQPG (62 aa). Positions 185-197 are enriched in low complexity; that stretch reads PAAQDTPGAAPGQ. The RGS domain maps to 262–378; the sequence is SFDKLMVTPA…MNSAVYKDLL (117 aa).

Forms a complex with G(alpha)z/i2 subunits and mu-opioid receptors; the formation of this complex results in mu-opioid receptor desensitization. Interacts with OPRM1. Post-translationally, fatty acylated. Heavily palmitoylated in the cysteine string motif. In terms of processing, N- and O-glycosylated in synapsomal membranes. Serine phosphorylated in synapsomal membranes. Post-translationally, sumoylated with SUMO1 and SUMO2 in synaptosomes. The sumoylated forms act as a scaffold for sequestering mu-opioid receptor-activated G(alpha) subunits. As to expression, isoform 5 is expressed in brain at high levels in the caudate nucleus and temporal lobe.

The protein resides in the membrane. Its subcellular location is the nucleus. The protein localises to the cytoplasm. In terms of biological role, inhibits signal transduction by increasing the GTPase activity of G protein alpha subunits thereby driving them into their inactive GDP-bound form. Binds selectively to G(z)-alpha and G(alpha)-i2 subunits, accelerates their GTPase activity and regulates their signaling activities. The G(z)-alpha activity is inhibited by the phosphorylation and palmitoylation of the G-protein. Negatively regulates mu-opioid receptor-mediated activation of the G-proteins. This Homo sapiens (Human) protein is Regulator of G-protein signaling 20 (RGS20).